The sequence spans 301 residues: Pantothenate synthetase (301 aa).

Met-30–His-37 lines the ATP pocket. His-37 serves as the catalytic Proton donor. Gln-61 contacts (R)-pantoate. Gln-61 serves as a coordination point for beta-alanine. Residue Gly-149 to Asp-152 coordinates ATP. Residue Gln-155 participates in (R)-pantoate binding. Residues Val-178 and Met-186–Arg-189 contribute to the ATP site.

It belongs to the pantothenate synthetase family. In terms of assembly, homodimer.

The protein resides in the cytoplasm. The enzyme catalyses (R)-pantoate + beta-alanine + ATP = (R)-pantothenate + AMP + diphosphate + H(+). It functions in the pathway cofactor biosynthesis; (R)-pantothenate biosynthesis; (R)-pantothenate from (R)-pantoate and beta-alanine: step 1/1. Functionally, catalyzes the condensation of pantoate with beta-alanine in an ATP-dependent reaction via a pantoyl-adenylate intermediate. This Vibrio vulnificus (strain CMCP6) protein is Pantothenate synthetase.